Here is a 361-residue protein sequence, read N- to C-terminus: Protein RecA (361 aa).

Position 77 to 84 (glycine 77 to threonine 84) interacts with ATP.

Belongs to the RecA family.

Its subcellular location is the cytoplasm. Functionally, can catalyze the hydrolysis of ATP in the presence of single-stranded DNA, the ATP-dependent uptake of single-stranded DNA by duplex DNA, and the ATP-dependent hybridization of homologous single-stranded DNAs. It interacts with LexA causing its activation and leading to its autocatalytic cleavage. This Brucella abortus (strain S19) protein is Protein RecA.